The sequence spans 152 residues: Xanthine-guanine phosphoribosyltransferase (152 aa).

Residues 37 to 38 (RG), Arg-69, and 88 to 96 (DDLVDSGDT) contribute to the 5-phospho-alpha-D-ribose 1-diphosphate site. Residue Arg-69 participates in GMP binding. Asp-89 is a binding site for Mg(2+). Guanine is bound by residues Asp-92 and Ile-135. Positions 92 and 135 each coordinate xanthine. Residues 92–96 (DSGDT) and 134–135 (WI) each bind GMP.

The protein belongs to the purine/pyrimidine phosphoribosyltransferase family. XGPT subfamily. In terms of assembly, homotetramer. It depends on Mg(2+) as a cofactor.

The protein localises to the cell inner membrane. The enzyme catalyses GMP + diphosphate = guanine + 5-phospho-alpha-D-ribose 1-diphosphate. It carries out the reaction XMP + diphosphate = xanthine + 5-phospho-alpha-D-ribose 1-diphosphate. The catalysed reaction is IMP + diphosphate = hypoxanthine + 5-phospho-alpha-D-ribose 1-diphosphate. It participates in purine metabolism; GMP biosynthesis via salvage pathway; GMP from guanine: step 1/1. Its pathway is purine metabolism; XMP biosynthesis via salvage pathway; XMP from xanthine: step 1/1. In terms of biological role, purine salvage pathway enzyme that catalyzes the transfer of the ribosyl-5-phosphate group from 5-phospho-alpha-D-ribose 1-diphosphate (PRPP) to the N9 position of the 6-oxopurines guanine and xanthine to form the corresponding ribonucleotides GMP (guanosine 5'-monophosphate) and XMP (xanthosine 5'-monophosphate), with the release of PPi. To a lesser extent, also acts on hypoxanthine. The polypeptide is Xanthine-guanine phosphoribosyltransferase (Aliivibrio salmonicida (strain LFI1238) (Vibrio salmonicida (strain LFI1238))).